The primary structure comprises 507 residues: Maturase K (507 aa).

It belongs to the intron maturase 2 family. MatK subfamily.

The protein localises to the plastid. It localises to the chloroplast. Its function is as follows. Usually encoded in the trnK tRNA gene intron. Probably assists in splicing its own and other chloroplast group II introns. This Asimina triloba (Pawpaw) protein is Maturase K.